The sequence spans 143 residues: Large ribosomal subunit protein uL11 (143 aa).

This sequence belongs to the universal ribosomal protein uL11 family. As to quaternary structure, part of the ribosomal stalk of the 50S ribosomal subunit. Interacts with L10 and the large rRNA to form the base of the stalk. L10 forms an elongated spine to which L12 dimers bind in a sequential fashion forming a multimeric L10(L12)X complex. Post-translationally, one or more lysine residues are methylated.

In terms of biological role, forms part of the ribosomal stalk which helps the ribosome interact with GTP-bound translation factors. The polypeptide is Large ribosomal subunit protein uL11 (Nitrosomonas eutropha (strain DSM 101675 / C91 / Nm57)).